A 319-amino-acid polypeptide reads, in one-letter code: MEPILAKNPNRFVIFPIQYHDIWNMYKKAEASFWTVEEVDISKDINDWNKLTPDEKYFIKHVLAFFAASDGIVNENLAERFCIEVQITEARCFYGFQMAIENIHSEMYSLLIDTYVKDSNEKNYLFNAIETMPCVKKKADWAQKWIHDSASYGERLIAFAAVEGIFFSGSFASIFWLKKRGLMPGLTFSNELISRDEGLHCDFACLMFKHLLYPPSEETVRSIITDAVSIEQEFLTVALPVKLIGMNCEMMKTYIKFVADRLISELGFKKIYNVTNPFDFMENISLEGKTNFFEKRVGEYQKMGVMSQEDNHFSLDVDF.

Positions 70, 101, and 104 each coordinate Fe cation. Tyr108 is an active-site residue. The Fe cation site is built by Glu163, Glu197, and His200. The tract at residues 313–319 (FSLDVDF) is interaction with R1.

Belongs to the ribonucleoside diphosphate reductase small chain family. As to quaternary structure, interacts with RNR1/OPG080 subunit. Can interact with host RNR1 supunit. Requires Fe cation as cofactor.

The catalysed reaction is a 2'-deoxyribonucleoside 5'-diphosphate + [thioredoxin]-disulfide + H2O = a ribonucleoside 5'-diphosphate + [thioredoxin]-dithiol. Functionally, ribonucleoside-diphosphate reductase holoenzyme provides the precursors necessary for viral DNA synthesis. Allows virus growth in non-dividing cells. Catalyzes the biosynthesis of deoxyribonucleotides from the corresponding ribonucleotides. The polypeptide is Ribonucleoside-diphosphate reductase small chain (OPG048) (Variola virus).